The following is a 509-amino-acid chain: ATP synthase subunit alpha (509 aa).

169–176 (GDRQTGKT) serves as a coordination point for ATP.

This sequence belongs to the ATPase alpha/beta chains family. In terms of assembly, F-type ATPases have 2 components, CF(1) - the catalytic core - and CF(0) - the membrane proton channel. CF(1) has five subunits: alpha(3), beta(3), gamma(1), delta(1), epsilon(1). CF(0) has three main subunits: a(1), b(2) and c(9-12). The alpha and beta chains form an alternating ring which encloses part of the gamma chain. CF(1) is attached to CF(0) by a central stalk formed by the gamma and epsilon chains, while a peripheral stalk is formed by the delta and b chains.

The protein localises to the cell inner membrane. The enzyme catalyses ATP + H2O + 4 H(+)(in) = ADP + phosphate + 5 H(+)(out). Its function is as follows. Produces ATP from ADP in the presence of a proton gradient across the membrane. The alpha chain is a regulatory subunit. The sequence is that of ATP synthase subunit alpha from Brucella ovis (strain ATCC 25840 / 63/290 / NCTC 10512).